A 319-amino-acid chain; its full sequence is D-alanine--D-alanine ligase (319 aa).

An ATP-grasp domain is found at 109–313; sequence KRVWLAEGLP…YEQLCLHILQ (205 aa). 139-194 contributes to the ATP binding site; that stretch reads PDDLGLPLIVKPPREGSSIGVTKVLGYSQMQDAVALSARHDPDVLCEEFIDGAEVT. Mg(2+) contacts are provided by D266, E280, and N282.

This sequence belongs to the D-alanine--D-alanine ligase family. Mg(2+) serves as cofactor. The cofactor is Mn(2+).

The protein localises to the cytoplasm. The catalysed reaction is 2 D-alanine + ATP = D-alanyl-D-alanine + ADP + phosphate + H(+). It functions in the pathway cell wall biogenesis; peptidoglycan biosynthesis. Functionally, cell wall formation. The sequence is that of D-alanine--D-alanine ligase from Methylibium petroleiphilum (strain ATCC BAA-1232 / LMG 22953 / PM1).